Consider the following 107-residue polypeptide: Translation initiation factor IF-1, chloroplastic (107 aa).

Residues 8 to 83 (REKKNPREAK…SKGRIIYRLP (76 aa)) enclose the S1-like domain. Positions 81–107 (RLPHKDSKRTEDSKDTEDLKDTKDSKG) are disordered. Over residues 83 to 107 (PHKDSKRTEDSKDTEDLKDTKDSKG) the composition is skewed to basic and acidic residues.

The protein belongs to the IF-1 family. Component of the 30S ribosomal translation pre-initiation complex which assembles on the 30S ribosome in the order IF-2 and IF-3, IF-1 and N-formylmethionyl-tRNA(fMet); mRNA recruitment can occur at any time during PIC assembly.

It localises to the plastid. It is found in the chloroplast. In terms of biological role, one of the essential components for the initiation of protein synthesis. Stabilizes the binding of IF-2 and IF-3 on the 30S subunit to which N-formylmethionyl-tRNA(fMet) subsequently binds. Helps modulate mRNA selection, yielding the 30S pre-initiation complex (PIC). Upon addition of the 50S ribosomal subunit IF-1, IF-2 and IF-3 are released leaving the mature 70S translation initiation complex. In Oryza sativa subsp. indica (Rice), this protein is Translation initiation factor IF-1, chloroplastic.